We begin with the raw amino-acid sequence, 1008 residues long: Phytosulfokine receptor 1 (1008 aa).

An N-terminal signal peptide occupies residues 1–25; the sequence is MRVHRFCVIVIFLTELLCFFYSSES. N-linked (GlcNAc...) asparagine glycosylation is found at N55, N64, and N73. 12 LRR repeats span residues 75-98, 99-123, 124-148, 150-170, 172-194, 195-219, 221-243, 244-266, 291-315, 316-339, 341-362, and 363-387; these read TGRV…SLGK, LDEI…IFNL, KNLQ…NLPA, QSFD…ICHN, TQIR…GFGK, CVLL…LFHL, RLNL…IRNL, SSLV…VFDE, SPSL…CTAM, IALN…LPDC, RLKN…SFKN, and FESL…GILQ. Residue N106 is glycosylated (N-linked (GlcNAc...) asparagine). 3 N-linked (GlcNAc...) asparagine glycosylation sites follow: N160, N170, and N187. N242 carries N-linked (GlcNAc...) asparagine glycosylation. R300 contributes to the phytosulfokine binding site. 2 N-linked (GlcNAc...) asparagine glycosylation sites follow: N301 and N311. Phytosulfokine is bound by residues N346, S370, and S372. N-linked (GlcNAc...) asparagine glycosylation is found at N373, N378, and N391. LRR repeat units lie at residues 392–414, 415–438, 439–464, and 466–486; these read LTTL…SLHF, EKLK…LSSS, NELQ…DFKA, and FYLD…LTKL. Positions 398, 424, and 445 each coordinate phytosulfokine. N-linked (GlcNAc...) asparagine glycans are attached at residues N472 and N493. Residue K508 participates in phytosulfokine binding. 2 N-linked (GlcNAc...) asparagine glycosylation sites follow: N510 and N534. LRR repeat units follow at residues 521 to 545, 546 to 570, 571 to 594, and 596 to 619; these read IFGF…EFGN, LKKL…LSGM, TSLE…LQQL, and FLSK…QFQT. N-linked (GlcNAc...) asparagine glycans are attached at residues N606 and N622. A helical transmembrane segment spans residues 660-680; that stretch reads MAIGIAFGSVFLLTLLSLIVL. A Phosphothreonine modification is found at T731. The Protein kinase domain maps to 734–1005; the sequence is FDQANIIGCG…PTTQQLVSWL (272 aa). Residues 740–748 and K762 each bind ATP; that span reads IGCGGFGMV. Phosphotyrosine is present on residues Y807 and Y847. The active-site Proton acceptor is the D860. A Phosphotyrosine modification is found at Y902.

The protein belongs to the protein kinase superfamily. Ser/Thr protein kinase family. Homo- and heterodimers with PSY1R. Heterodimers with the somatic embryogenesis receptor-like kinases (SERKs). PSK is not directly involved in PSKR-SERK interaction but stabilizes PSKR island domain for recruitment of a SERK. Part of a functional complex containing PSKR1, BAK1, CNGC17, and AHA. Interacts with AHA1, AHA2, and BAK1, but not with CNGC17 or BRI1. Requires Mg(2+) as cofactor. Mn(2+) serves as cofactor. Weakly expressed in roots, leaves, stems and flowers. Expressed in the primary and lateral roots, including root primordia and root tips, but not in the hypocotyl.

Its subcellular location is the cell membrane. The catalysed reaction is L-seryl-[protein] + ATP = O-phospho-L-seryl-[protein] + ADP + H(+). It catalyses the reaction L-threonyl-[protein] + ATP = O-phospho-L-threonyl-[protein] + ADP + H(+). It carries out the reaction GTP = 3',5'-cyclic GMP + diphosphate. Its activity is regulated as follows. cGMP suppresses kinase activity. Functionally, phytosulfokine receptor with both a serine/threonine-protein kinase activity and a guanylate cyclase activity. Regulates, in response to phytosulfokine binding, a signaling cascade involved in plant cell differentiation, organogenesis, somatic embryogenesis, cellular proliferation and plant growth. Involved in plant immunity, with antagonistic effects on bacterial and fungal resistances. Not involved in PSY perception. CNGC17 and AHAs form a functional cation-translocating unit that is activated by PSKR1/BAK1 and possibly other BAK1/RLK complexes. The chain is Phytosulfokine receptor 1 from Arabidopsis thaliana (Mouse-ear cress).